The following is a 159-amino-acid chain: Endoribonuclease YbeY (159 aa).

Positions 125, 129, and 135 each coordinate Zn(2+).

This sequence belongs to the endoribonuclease YbeY family. It depends on Zn(2+) as a cofactor.

The protein localises to the cytoplasm. Functionally, single strand-specific metallo-endoribonuclease involved in late-stage 70S ribosome quality control and in maturation of the 3' terminus of the 16S rRNA. The sequence is that of Endoribonuclease YbeY from Ligilactobacillus salivarius (strain UCC118) (Lactobacillus salivarius).